Reading from the N-terminus, the 93-residue chain is uncharacterized protein (93 aa).

This is an uncharacterized protein from Gallid herpesvirus 2 (strain Chicken/Md5/ATCC VR-987) (GaHV-2).